Consider the following 389-residue polypeptide: Phospho-N-acetylmuramoyl-pentapeptide-transferase (389 aa).

10 consecutive transmembrane segments (helical) span residues 25 to 45, 74 to 94, 97 to 117, 134 to 154, 190 to 210, 222 to 242, 259 to 279, 286 to 306, 311 to 331, and 366 to 386; these read RAVM…PWVI, MGGV…CDWG, FIWV…VDDY, FFWQ…SVSE, ISYP…IVGS, GLVI…AYVM, AGEL…FLWF, VFMG…VAVI, IVLF…MAQV, and QVTV…LSTL.

It belongs to the glycosyltransferase 4 family. MraY subfamily. Mg(2+) serves as cofactor.

It is found in the cell inner membrane. The enzyme catalyses UDP-N-acetyl-alpha-D-muramoyl-L-alanyl-gamma-D-glutamyl-meso-2,6-diaminopimeloyl-D-alanyl-D-alanine + di-trans,octa-cis-undecaprenyl phosphate = di-trans,octa-cis-undecaprenyl diphospho-N-acetyl-alpha-D-muramoyl-L-alanyl-D-glutamyl-meso-2,6-diaminopimeloyl-D-alanyl-D-alanine + UMP. Its pathway is cell wall biogenesis; peptidoglycan biosynthesis. Catalyzes the initial step of the lipid cycle reactions in the biosynthesis of the cell wall peptidoglycan: transfers peptidoglycan precursor phospho-MurNAc-pentapeptide from UDP-MurNAc-pentapeptide onto the lipid carrier undecaprenyl phosphate, yielding undecaprenyl-pyrophosphoryl-MurNAc-pentapeptide, known as lipid I. The chain is Phospho-N-acetylmuramoyl-pentapeptide-transferase from Cupriavidus necator (strain ATCC 17699 / DSM 428 / KCTC 22496 / NCIMB 10442 / H16 / Stanier 337) (Ralstonia eutropha).